A 348-amino-acid polypeptide reads, in one-letter code: Mitogen-activated protein kinase 14B (348 aa).

In terms of domain architecture, Protein kinase spans 25–309 (YQNLSPVGSG…ASQALAHPYF (285 aa)). ATP-binding positions include 31 to 39 (VGSGAYGSV) and K54. D169 functions as the Proton acceptor in the catalytic mechanism. Phosphothreonine; by MAP2K3 is present on T181. Residues 181–183 (TGY) carry the TXY motif. Y183 carries the phosphotyrosine; by MAP2K3 modification.

Belongs to the protein kinase superfamily. CMGC Ser/Thr protein kinase family. MAP kinase subfamily. It depends on Mg(2+) as a cofactor. In terms of processing, dually phosphorylated on Thr-181 and Tyr-183, which activates the enzyme.

The protein localises to the cytoplasm. The protein resides in the nucleus. It carries out the reaction L-seryl-[protein] + ATP = O-phospho-L-seryl-[protein] + ADP + H(+). The enzyme catalyses L-threonyl-[protein] + ATP = O-phospho-L-threonyl-[protein] + ADP + H(+). Its activity is regulated as follows. Activated by threonine and tyrosine phosphorylation by the dual specificity kinase, MKK3. In terms of biological role, serine/threonine kinase which acts as an essential component of the MAP kinase signal transduction pathway. Mapk14b is one of the four p38 MAPKs which play an important role in the cascades of cellular responses evoked by extracellular stimuli such as pro-inflammatory cytokines or physical stress leading to direct activation of transcription factors. Accordingly, p38 MAPKs phosphorylate a broad range of proteins and it has been estimated that they may have approximately 200 to 300 substrates each. Some of the targets are downstream kinases which are activated through phosphorylation and further phosphorylate additional targets. This is Mitogen-activated protein kinase 14B (mapk14b) from Danio rerio (Zebrafish).